Here is a 121-residue protein sequence, read N- to C-terminus: Large ribosomal subunit protein uL18 (121 aa).

Belongs to the universal ribosomal protein uL18 family. As to quaternary structure, part of the 50S ribosomal subunit; part of the 5S rRNA/L5/L18/L25 subcomplex. Contacts the 5S and 23S rRNAs.

Its function is as follows. This is one of the proteins that bind and probably mediate the attachment of the 5S RNA into the large ribosomal subunit, where it forms part of the central protuberance. In Streptococcus suis (strain 98HAH33), this protein is Large ribosomal subunit protein uL18.